Consider the following 132-residue polypeptide: UPF0102 protein Ajs_0414 (132 aa).

The segment at 1–23 is disordered; it reads MGFLGKKVNGSAPARTTRAAGQA.

Belongs to the UPF0102 family.

This Acidovorax sp. (strain JS42) protein is UPF0102 protein Ajs_0414.